A 441-amino-acid polypeptide reads, in one-letter code: Tubulin beta chain, nucleomorph (441 aa).

Residues Q11, E69, S138, G142, T143, G144, N204, and N226 each contribute to the GTP site. E69 provides a ligand contact to Mg(2+).

The protein belongs to the tubulin family. As to quaternary structure, dimer of alpha and beta chains. A typical microtubule is a hollow water-filled tube with an outer diameter of 25 nm and an inner diameter of 15 nM. Alpha-beta heterodimers associate head-to-tail to form protofilaments running lengthwise along the microtubule wall with the beta-tubulin subunit facing the microtubule plus end conferring a structural polarity. Microtubules usually have 13 protofilaments but different protofilament numbers can be found in some organisms and specialized cells. The cofactor is Mg(2+).

Functionally, tubulin is the major constituent of microtubules, a cylinder consisting of laterally associated linear protofilaments composed of alpha- and beta-tubulin heterodimers. Microtubules grow by the addition of GTP-tubulin dimers to the microtubule end, where a stabilizing cap forms. Below the cap, tubulin dimers are in GDP-bound state, owing to GTPase activity of alpha-tubulin. In Guillardia theta (Cryptophyte), this protein is Tubulin beta chain, nucleomorph (tubB).